Reading from the N-terminus, the 537-residue chain is CTP synthase (537 aa).

An amidoligase domain region spans residues 1-267; it reads MTKYIFVTGG…DQIVCDHLKL (267 aa). Ser-13 is a binding site for CTP. Ser-13 contacts UTP. 14-19 is an ATP binding site; it reads SIGKGI. Residue Tyr-54 participates in L-glutamine binding. An ATP-binding site is contributed by Asp-71. 2 residues coordinate Mg(2+): Asp-71 and Glu-141. CTP is bound by residues 148-150, 188-193, and Lys-224; these read DIE and KTKPTQ. UTP is bound by residues 188 to 193 and Lys-224; that span reads KTKPTQ. 240 to 242 contacts ATP; that stretch reads RDV. The Glutamine amidotransferase type-1 domain occupies 292 to 535; the sequence is RIALVGKYVE…VTAAVKNKNQ (244 aa). Gly-354 is a binding site for L-glutamine. Cys-381 functions as the Nucleophile; for glutamine hydrolysis in the catalytic mechanism. Residues 382 to 385, Glu-405, and Arg-463 each bind L-glutamine; that span reads LGMQ. Residues His-508 and Glu-510 contribute to the active site.

The protein belongs to the CTP synthase family. In terms of assembly, homotetramer.

The catalysed reaction is UTP + L-glutamine + ATP + H2O = CTP + L-glutamate + ADP + phosphate + 2 H(+). It catalyses the reaction L-glutamine + H2O = L-glutamate + NH4(+). The enzyme catalyses UTP + NH4(+) + ATP = CTP + ADP + phosphate + 2 H(+). It participates in pyrimidine metabolism; CTP biosynthesis via de novo pathway; CTP from UDP: step 2/2. Allosterically activated by GTP, when glutamine is the substrate; GTP has no effect on the reaction when ammonia is the substrate. The allosteric effector GTP functions by stabilizing the protein conformation that binds the tetrahedral intermediate(s) formed during glutamine hydrolysis. Inhibited by the product CTP, via allosteric rather than competitive inhibition. Its function is as follows. Catalyzes the ATP-dependent amination of UTP to CTP with either L-glutamine or ammonia as the source of nitrogen. Regulates intracellular CTP levels through interactions with the four ribonucleotide triphosphates. The protein is CTP synthase of Streptococcus equi subsp. zooepidemicus (strain H70).